The chain runs to 874 residues: Alanine--tRNA ligase (874 aa).

Residues H561, H565, C663, and H667 each coordinate Zn(2+).

This sequence belongs to the class-II aminoacyl-tRNA synthetase family. It depends on Zn(2+) as a cofactor.

The protein resides in the cytoplasm. The enzyme catalyses tRNA(Ala) + L-alanine + ATP = L-alanyl-tRNA(Ala) + AMP + diphosphate. Its function is as follows. Catalyzes the attachment of alanine to tRNA(Ala) in a two-step reaction: alanine is first activated by ATP to form Ala-AMP and then transferred to the acceptor end of tRNA(Ala). Also edits incorrectly charged Ser-tRNA(Ala) and Gly-tRNA(Ala) via its editing domain. The polypeptide is Alanine--tRNA ligase (Trichodesmium erythraeum (strain IMS101)).